A 1273-amino-acid polypeptide reads, in one-letter code: DNA-directed RNA polymerase subunit beta (1273 aa).

The interval Ala1252–Ser1273 is disordered.

The protein belongs to the RNA polymerase beta chain family. In terms of assembly, the RNAP catalytic core consists of 2 alpha, 1 beta, 1 beta' and 1 omega subunit. When a sigma factor is associated with the core the holoenzyme is formed, which can initiate transcription.

The enzyme catalyses RNA(n) + a ribonucleoside 5'-triphosphate = RNA(n+1) + diphosphate. DNA-dependent RNA polymerase catalyzes the transcription of DNA into RNA using the four ribonucleoside triphosphates as substrates. The chain is DNA-directed RNA polymerase subunit beta from Dehalococcoides mccartyi (strain CBDB1).